The sequence spans 234 residues: Purine nucleoside phosphorylase DeoD-type (234 aa).

His-5 is a binding site for a purine D-ribonucleoside. Residues Gly-21, Arg-25, Arg-44, and Arg-88–Thr-91 each bind phosphate. A purine D-ribonucleoside-binding positions include Glu-178 to Glu-180 and Ser-202 to Asp-203. Asp-203 functions as the Proton donor in the catalytic mechanism.

It belongs to the PNP/UDP phosphorylase family. As to quaternary structure, homohexamer; trimer of homodimers.

The catalysed reaction is a purine D-ribonucleoside + phosphate = a purine nucleobase + alpha-D-ribose 1-phosphate. It carries out the reaction a purine 2'-deoxy-D-ribonucleoside + phosphate = a purine nucleobase + 2-deoxy-alpha-D-ribose 1-phosphate. Its function is as follows. Catalyzes the reversible phosphorolytic breakdown of the N-glycosidic bond in the beta-(deoxy)ribonucleoside molecules, with the formation of the corresponding free purine bases and pentose-1-phosphate. This is Purine nucleoside phosphorylase DeoD-type from Lactococcus lactis subsp. cremoris (strain MG1363).